The chain runs to 398 residues: Dual specificity protein phosphatase 4 (398 aa).

Valine 2 is modified (N-acetylvaline). Residues 45–163 (SGGKCLLLDC…FSSEYPEFCS (119 aa)) form the Rhodanese domain. The 142-residue stretch at 199-340 (GPVEILPFLY…LLQFESQVLT (142 aa)) folds into the Tyrosine-protein phosphatase domain. Cysteine 284 (phosphocysteine intermediate) is an active-site residue. 2 positions are modified to phosphoserine; by MAPK: serine 390 and serine 395.

This sequence belongs to the protein-tyrosine phosphatase family. Non-receptor class dual specificity subfamily. As to quaternary structure, hollow spherical complex composed of 24 subunits with pseudooctahedral symmetry, has a tetramer as the basic unit. In terms of processing, phosphorylation in the C-terminus by ERK1/2 inhibits proteasomal degradation and stabilizes the protein.

The protein localises to the nucleus. The catalysed reaction is O-phospho-L-tyrosyl-[protein] + H2O = L-tyrosyl-[protein] + phosphate. The enzyme catalyses O-phospho-L-seryl-[protein] + H2O = L-seryl-[protein] + phosphate. It catalyses the reaction O-phospho-L-threonyl-[protein] + H2O = L-threonyl-[protein] + phosphate. Regulates mitogenic signal transduction by dephosphorylating both Thr and Tyr residues on MAP kinases ERK1 and ERK2. This Mus musculus (Mouse) protein is Dual specificity protein phosphatase 4 (Dusp4).